The primary structure comprises 110 residues: MRLIILCLAALVLLIQFPLWLGKGGWLRVWDLDQQVIAAQKKNDELRARNAKLNSEVQDLKEGTGAVEERARYELGMIKENEIFVQVLDPNKKSSFVSIPPPKIEPKEKR.

Residues 1-3 (MRL) are Cytoplasmic-facing. The helical transmembrane segment at 4–21 (IILCLAALVLLIQFPLWL) threads the bilayer. At 22 to 110 (GKGGWLRVWD…PPKIEPKEKR (89 aa)) the chain is on the periplasmic side. Residues 31–64 (DLDQQVIAAQKKNDELRARNAKLNSEVQDLKEGT) are a coiled coil.

The protein belongs to the FtsB family. In terms of assembly, part of a complex composed of FtsB, FtsL and FtsQ.

It is found in the cell inner membrane. Essential cell division protein. May link together the upstream cell division proteins, which are predominantly cytoplasmic, with the downstream cell division proteins, which are predominantly periplasmic. The protein is Cell division protein FtsB of Herminiimonas arsenicoxydans.